Reading from the N-terminus, the 540-residue chain is Beta-glucosidase 1B (540 aa).

3 residues coordinate substrate: Gln-25, His-128, and Asn-174. The Proton donor role is filled by Glu-175. Tyr-316 contributes to the substrate binding site. The active-site Nucleophile is Glu-380. Residues Trp-430 and 437 to 438 each bind substrate; that span reads EW. A compositionally biased stretch (low complexity) spans 481–492; that stretch reads PAAETKKAATPS. The disordered stretch occupies residues 481–524; sequence PAAETKKAATPSPLKPHGAISNGVSKKSSATKEPKSASRKKGRK.

It belongs to the glycosyl hydrolase 1 family.

The catalysed reaction is Hydrolysis of terminal, non-reducing beta-D-glucosyl residues with release of beta-D-glucose.. Its function is as follows. Plays an important role in cellulose degradation. Shows hydrolytic activity against several glycosidic compounds. The polypeptide is Beta-glucosidase 1B (Phanerodontia chrysosporium (White-rot fungus)).